Consider the following 558-residue polypeptide: Laccase-10 (558 aa).

Residues 1-22 (MVFPIRILVLFALLAFPACVHG) form the signal peptide. 2 Plastocyanin-like domains span residues 30-146 (NVVT…PKLG) and 157-308 (EEVI…YSGT). An N-linked (GlcNAc...) asparagine glycan is attached at asparagine 76. Histidine 80 and histidine 82 together coordinate Cu cation. Asparagine 112 is a glycosylation site (N-linked (GlcNAc...) asparagine). Residues histidine 125 and histidine 127 each coordinate Cu cation. Residues asparagine 185, asparagine 296, asparagine 323, asparagine 373, asparagine 383, asparagine 400, and asparagine 441 are each glycosylated (N-linked (GlcNAc...) asparagine). The 135-residue stretch at 408–542 (DFPAKPRRVF…KMAFLVENGK (135 aa)) folds into the Plastocyanin-like 3 domain. Residues histidine 459, histidine 462, histidine 464, histidine 521, cysteine 522, histidine 523, and histidine 527 each contribute to the Cu cation site. The N-linked (GlcNAc...) asparagine glycan is linked to asparagine 545.

The protein belongs to the multicopper oxidase family. It depends on Cu cation as a cofactor. Ubiquitous, with lower levels in siliques.

The protein localises to the secreted. It localises to the extracellular space. The protein resides in the apoplast. It catalyses the reaction 4 hydroquinone + O2 = 4 benzosemiquinone + 2 H2O. Its function is as follows. Lignin degradation and detoxification of lignin-derived products. The chain is Laccase-10 (LAC10) from Arabidopsis thaliana (Mouse-ear cress).